The primary structure comprises 963 residues: Low-density lipoprotein receptor-related protein 8 (963 aa).

The first 32 residues, 1–32 (MGLPEPGPLRLLALLLLLLLLLLLQLQHLAAA), serve as a signal peptide directing secretion. The Extracellular segment spans residues 42–826 (GPAKDCEKDQ…SKMGSTVTAA (785 aa)). LDL-receptor class A domains lie at 46-82 (DCEK…DDCP), 85-123 (TCAD…ATCT), 126-164 (VCPA…AGCA), 166-202 (LCAP…RGCA), 205-246 (ACGP…ELCG), 258-295 (ACAT…ADCP), and 298-334 (TCRG…AGCL). Disulfide bonds link Cys-47–Cys-59, Cys-54–Cys-72, Cys-66–Cys-81, Cys-86–Cys-98, Cys-93–Cys-111, Cys-105–Cys-122, Cys-127–Cys-141, Cys-134–Cys-154, Cys-148–Cys-163, Cys-167–Cys-179, Cys-174–Cys-192, Cys-186–Cys-201, Cys-206–Cys-221, Cys-213–Cys-234, Cys-228–Cys-245, Cys-259–Cys-272, Cys-267–Cys-285, Cys-279–Cys-294, Cys-299–Cys-311, Cys-306–Cys-324, Cys-318–Cys-333, Cys-340–Cys-351, Cys-347–Cys-360, Cys-362–Cys-374, Cys-380–Cys-390, Cys-386–Cys-399, and Cys-401–Cys-414. Ca(2+) is bound by residues Trp-64, Asp-67, Asp-69, Asp-71, Asp-77, and Glu-78. A glycan (N-linked (GlcNAc...) asparagine) is linked at Asn-176. The 40-residue stretch at 336 to 375 (GLNECLHNNGGCSHICTDLKIGFECTCPAGFQLLDQKTCG) folds into the EGF-like 1 domain. One can recognise an EGF-like 2; calcium-binding domain in the interval 376–415 (DIDECKDPDACSQICVNYKGYFKCECYPGYEMDLLTKNCK). N-linked (GlcNAc...) asparagine glycosylation occurs at Asn-441. LDL-receptor class B repeat units lie at residues 462–508 (NRIY…DWVH), 509–551 (KHIY…DPLR), 552–595 (GFMY…DLLS), 596–639 (QRLY…VFED), and 640–681 (KVFW…FHEL). Residues Asn-518 and Asn-538 are each glycosylated (N-linked (GlcNAc...) asparagine). Residues 740–798 (STSTTTLASTMTRTVPATTRAPGTTVHRSTYQNHSTETPSLTAAVPSSVSVPRAPSISP) are clustered O-linked oligosaccharides. The segment at 754-815 (VPATTRAPGT…SNHSQHYANE (62 aa)) is disordered. The segment covering 765 to 777 (VHRSTYQNHSTET) has biased composition (polar residues). Asn-772 carries N-linked (GlcNAc...) asparagine glycosylation. Over residues 778 to 799 (PSLTAAVPSSVSVPRAPSISPS) the composition is skewed to low complexity. Over residues 800 to 812 (TLSPATSNHSQHY) the composition is skewed to polar residues. An N-linked (GlcNAc...) asparagine glycan is attached at Asn-807. The helical transmembrane segment at 827–847 (VIGIIVPIVVIALLCMSGYLI) threads the bilayer. At 848–963 (WRNWKRKNTK…ALSLEDDGLP (116 aa)) the chain is on the cytoplasmic side.

It belongs to the LDLR family. Homooligomer. Interacts with VLDLR. Reelin associates with two or more receptor molecules. Interacts with DAB1 and JNK-interacting proteins. Interacts with SNX17. Interacts with PCSK9. Interacts with MDK; this interaction is calcium dependent. Interacts with CLU. In terms of assembly, (Microbial infection) Interacts with Semliki Forest virus E2-E1 heterodimer; this interaction mediates viral entry to host cell. As to quaternary structure, (Microbial infection) Interacts (via class A repeats) with Eastern equine encephalitis virus spike glycoprotein E2; this interaction mediates viral entry into host cell. In terms of processing, O-glycosylated. Some alternatively spliced isoforms lack the O-linked sugar domain. Post-translationally, undergoes sequential, furin and gamma-secretase dependent, proteolytic processing, resulting in the extracellular release of the entire ligand-binding domain as a soluble polypeptide and in the intracellular domain (ICD) release into the cytoplasm. The gamma-secretase-dependent proteolytical processing occurs after the bulk of the extracellular domain has been shed, in a furin-dependent manner, in alternatively spliced isoforms carrying the furin cleavage site. Hypoglycosylation (mainly hypo-O-glycosylation) leads to increased extracellular cleavage, which in turn results in accelerating release of the intracellular domain (ICD) by the gamma-secretase. The resulting receptor fragment is able to inhibit Reelin signaling and in particular the Reelin-induced DAB1 phosphorylation. Tyrosine phosphorylated upon apoE binding. In terms of processing, ubiquitinated by MYLIP leading to degradation. Expressed mainly in brain and placenta. Also expressed in platelets and megakaryocytic cells. Not expressed in the liver.

It localises to the cell membrane. The protein localises to the secreted. Its function is as follows. Cell surface receptor for Reelin (RELN) and apolipoprotein E (apoE)-containing ligands. LRP8 participates in transmitting the extracellular Reelin signal to intracellular signaling processes, by binding to DAB1 on its cytoplasmic tail. Reelin acts via both the VLDL receptor (VLDLR) and LRP8 to regulate DAB1 tyrosine phosphorylation and microtubule function in neurons. LRP8 has higher affinity for Reelin than VLDLR. LRP8 is thus a key component of the Reelin pathway which governs neuronal layering of the forebrain during embryonic brain development. Binds the endoplasmic reticulum resident receptor-associated protein (RAP). Binds dimers of beta 2-glycoprotein I and may be involved in the suppression of platelet aggregation in the vasculature. Highly expressed in the initial segment of the epididymis, where it affects the functional expression of clusterin and phospholipid hydroperoxide glutathione peroxidase (PHGPx), two proteins required for sperm maturation. May also function as an endocytic receptor. Not required for endocytic uptake of SEPP1 in the kidney which is mediated by LRP2. Together with its ligand, apolipoprotein E (apoE), may indirectly play a role in the suppression of the innate immune response by controlling the survival of myeloid-derived suppressor cells. In terms of biological role, (Microbial infection) Acts as a receptor for Semliki Forest virus. This Homo sapiens (Human) protein is Low-density lipoprotein receptor-related protein 8 (LRP8).